A 493-amino-acid polypeptide reads, in one-letter code: UDP-N-acetylmuramate--L-alanine ligase (493 aa).

Residue 112-118 coordinates ATP; the sequence is GTHGKTT.

It belongs to the MurCDEF family.

Its subcellular location is the cytoplasm. The catalysed reaction is UDP-N-acetyl-alpha-D-muramate + L-alanine + ATP = UDP-N-acetyl-alpha-D-muramoyl-L-alanine + ADP + phosphate + H(+). The protein operates within cell wall biogenesis; peptidoglycan biosynthesis. In terms of biological role, cell wall formation. This Nitrosospira multiformis (strain ATCC 25196 / NCIMB 11849 / C 71) protein is UDP-N-acetylmuramate--L-alanine ligase.